The sequence spans 542 residues: CTP synthase (542 aa).

Positions 1-265 are amidoligase domain; sequence MARYVFITGG…DDEVLAAFGI (265 aa). Ser13 is a CTP binding site. Ser13 serves as a coordination point for UTP. Residues 14-19 and Asp71 each bind ATP; that span reads SLGKGI. 2 residues coordinate Mg(2+): Asp71 and Glu139. CTP contacts are provided by residues 146-148, 186-191, and Lys222; these read DIE and KTKPTQ. Residues 186-191 and Lys222 contribute to the UTP site; that span reads KTKPTQ. A Glutamine amidotransferase type-1 domain is found at 291 to 541; sequence TIAIVGKYTG…IEAATEQSRL (251 aa). L-glutamine is bound at residue Gly353. Cys380 serves as the catalytic Nucleophile; for glutamine hydrolysis. L-glutamine contacts are provided by residues 381-384, Glu404, and Arg469; that span reads FGMQ. Residues His514 and Glu516 contribute to the active site.

Belongs to the CTP synthase family. Homotetramer.

The enzyme catalyses UTP + L-glutamine + ATP + H2O = CTP + L-glutamate + ADP + phosphate + 2 H(+). The catalysed reaction is L-glutamine + H2O = L-glutamate + NH4(+). It catalyses the reaction UTP + NH4(+) + ATP = CTP + ADP + phosphate + 2 H(+). Its pathway is pyrimidine metabolism; CTP biosynthesis via de novo pathway; CTP from UDP: step 2/2. With respect to regulation, allosterically activated by GTP, when glutamine is the substrate; GTP has no effect on the reaction when ammonia is the substrate. The allosteric effector GTP functions by stabilizing the protein conformation that binds the tetrahedral intermediate(s) formed during glutamine hydrolysis. Inhibited by the product CTP, via allosteric rather than competitive inhibition. Functionally, catalyzes the ATP-dependent amination of UTP to CTP with either L-glutamine or ammonia as the source of nitrogen. Regulates intracellular CTP levels through interactions with the four ribonucleotide triphosphates. This is CTP synthase from Rhizobium johnstonii (strain DSM 114642 / LMG 32736 / 3841) (Rhizobium leguminosarum bv. viciae).